The sequence spans 168 residues: G/U mismatch-specific DNA glycosylase (168 aa).

The protein belongs to the uracil-DNA glycosylase (UDG) superfamily. TDG/mug family. Binds DNA as a monomer.

The protein resides in the cytoplasm. The enzyme catalyses Specifically hydrolyzes mismatched double-stranded DNA and polynucleotides, releasing free uracil.. Functionally, excises ethenocytosine and uracil, which can arise by alkylation or deamination of cytosine, respectively, from the corresponding mispairs with guanine in ds-DNA. It is capable of hydrolyzing the carbon-nitrogen bond between the sugar-phosphate backbone of the DNA and the mispaired base. The complementary strand guanine functions in substrate recognition. Required for DNA damage lesion repair in stationary-phase cells. In Salmonella dublin (strain CT_02021853), this protein is G/U mismatch-specific DNA glycosylase.